A 113-amino-acid chain; its full sequence is UPF0321 protein C569.02c (113 aa).

An N-terminal signal peptide occupies residues 1–17; sequence MLLLFCICCAFIKLVLA. N-linked (GlcNAc...) asparagine glycans are attached at residues asparagine 20, asparagine 39, and asparagine 65.

It belongs to the UPF0321 family.

This is UPF0321 protein C569.02c from Schizosaccharomyces pombe (strain 972 / ATCC 24843) (Fission yeast).